Reading from the N-terminus, the 215-residue chain is Probable phosphoglycerate mutase GpmB (215 aa).

Residues 8 to 15 (RHGETQWN), 21 to 22 (QG), Arg58, Arg60, 82 to 85 (ELNM), 104 to 105 (RR), and 151 to 152 (GI) each bind substrate. Residue His9 is the Tele-phosphohistidine intermediate of the active site. Glu82 serves as the catalytic Proton donor/acceptor.

Belongs to the phosphoglycerate mutase family. GpmB subfamily.

It catalyses the reaction (2R)-2-phosphoglycerate = (2R)-3-phosphoglycerate. The protein operates within carbohydrate degradation; glycolysis; pyruvate from D-glyceraldehyde 3-phosphate: step 3/5. The protein is Probable phosphoglycerate mutase GpmB of Escherichia fergusonii (strain ATCC 35469 / DSM 13698 / CCUG 18766 / IAM 14443 / JCM 21226 / LMG 7866 / NBRC 102419 / NCTC 12128 / CDC 0568-73).